A 41-amino-acid polypeptide reads, in one-letter code: Large ribosomal subunit protein bL32c (41 aa).

Belongs to the bacterial ribosomal protein bL32 family.

The protein resides in the plastid. This Helicosporidium sp. subsp. Simulium jonesii (Green alga) protein is Large ribosomal subunit protein bL32c (rpl32).